Reading from the N-terminus, the 414-residue chain is Na(+)-translocating NADH-quinone reductase subunit B (414 aa).

Transmembrane regions (helical) follow at residues 23–40, 56–76, 129–149, and 164–184; these read WFAL…PGLV, IMIM…YNAG, FLPI…LFCM, and ILFA…LGIT. FMN phosphoryl threonine is present on threonine 236. A run of 5 helical transmembrane segments spans residues 268 to 288, 297 to 317, 325 to 345, 358 to 378, and 381 to 401; these read IPGS…AMIV, IIAG…VVGS, MPWH…FMAT, WWYG…NPAY, and GMML…HVVI.

The protein belongs to the NqrB/RnfD family. Composed of six subunits; NqrA, NqrB, NqrC, NqrD, NqrE and NqrF. The cofactor is FMN.

It localises to the cell inner membrane. The catalysed reaction is a ubiquinone + n Na(+)(in) + NADH + H(+) = a ubiquinol + n Na(+)(out) + NAD(+). Its function is as follows. NQR complex catalyzes the reduction of ubiquinone-1 to ubiquinol by two successive reactions, coupled with the transport of Na(+) ions from the cytoplasm to the periplasm. NqrA to NqrE are probably involved in the second step, the conversion of ubisemiquinone to ubiquinol. The polypeptide is Na(+)-translocating NADH-quinone reductase subunit B (Vibrio parahaemolyticus serotype O3:K6 (strain RIMD 2210633)).